Consider the following 257-residue polypeptide: MRYALGVEYDGSEFQGWQQLGEHGGPSVQASLQAALSSVADAPVQVVCAGRTDAGVHGECQVVHFDSDAHREPRGWMLGTTARLPPSIAVRWCVPAAADFHARFSARARRYRYRLLNRQIRPALYRQTLSWERRPLDADAMHVAAQALLGENDFSAFRSVQCQALHARRNLQAIHVQRIGEVVEVQVQANAFLHHMVRNIVGSLILVGTGEQPADWIATLLAGRDRTVAGPTAPPQGLVFIGPLYPAEWHLPAEVTQ.

The active-site Nucleophile is Asp53. Tyr111 contacts substrate.

The protein belongs to the tRNA pseudouridine synthase TruA family. Homodimer.

The enzyme catalyses uridine(38/39/40) in tRNA = pseudouridine(38/39/40) in tRNA. Its function is as follows. Formation of pseudouridine at positions 38, 39 and 40 in the anticodon stem and loop of transfer RNAs. The protein is tRNA pseudouridine synthase A of Xanthomonas oryzae pv. oryzae (strain MAFF 311018).